The chain runs to 426 residues: N-formyl-4-amino-5-aminomethyl-2-methylpyrimidine deformylase (426 aa).

Residues 1 to 31 (MDQQIYSLQKKVEEHKEELIQLAKTLISYQT) are a coiled coil. A Zn(2+)-binding site is contributed by His89. Asp91 is an active-site residue. Asp122 serves as a coordination point for Zn(2+). Glu156 (proton acceptor) is an active-site residue. Glu157, Asp180, and His394 together coordinate Zn(2+).

The protein belongs to the peptidase M20A family. Zn(2+) is required as a cofactor. Requires Co(2+) as cofactor.

The enzyme catalyses N-formyl-4-amino-5-aminomethyl-2-methylpyrimidine + H2O = 4-amino-5-aminomethyl-2-methylpyrimidine + formate. Its pathway is cofactor biosynthesis; thiamine diphosphate biosynthesis. Functionally, catalyzes the deformylation of the formylaminopyrimidine N-formyl-4-amino-5-aminomethyl-2-methylpyrimidine (FAMP) to give the corresponding aminopyrimidine. The sequence is that of N-formyl-4-amino-5-aminomethyl-2-methylpyrimidine deformylase from Bacillus subtilis (strain 168).